Consider the following 403-residue polypeptide: Arginine biosynthesis bifunctional protein ArgJ (403 aa).

Residues Thr151, Lys177, Thr188, Glu275, Asn398, and Ser403 each coordinate substrate. The active-site Nucleophile is the Thr188.

This sequence belongs to the ArgJ family. Heterotetramer of two alpha and two beta chains.

It is found in the cytoplasm. It carries out the reaction N(2)-acetyl-L-ornithine + L-glutamate = N-acetyl-L-glutamate + L-ornithine. It catalyses the reaction L-glutamate + acetyl-CoA = N-acetyl-L-glutamate + CoA + H(+). It participates in amino-acid biosynthesis; L-arginine biosynthesis; L-ornithine and N-acetyl-L-glutamate from L-glutamate and N(2)-acetyl-L-ornithine (cyclic): step 1/1. It functions in the pathway amino-acid biosynthesis; L-arginine biosynthesis; N(2)-acetyl-L-ornithine from L-glutamate: step 1/4. Catalyzes two activities which are involved in the cyclic version of arginine biosynthesis: the synthesis of N-acetylglutamate from glutamate and acetyl-CoA as the acetyl donor, and of ornithine by transacetylation between N(2)-acetylornithine and glutamate. The sequence is that of Arginine biosynthesis bifunctional protein ArgJ from Caulobacter vibrioides (strain ATCC 19089 / CIP 103742 / CB 15) (Caulobacter crescentus).